An 81-amino-acid chain; its full sequence is Protein translocase subunit SecE (81 aa).

A helical membrane pass occupies residues 50-70 (VAVILMVILVSTVIYFVDQIF).

The protein belongs to the SecE/SEC61-gamma family. In terms of assembly, component of the Sec protein translocase complex. Heterotrimer consisting of SecY, SecE and SecG subunits. The heterotrimers can form oligomers, although 1 heterotrimer is thought to be able to translocate proteins. Interacts with the ribosome. Interacts with SecDF, and other proteins may be involved. Interacts with SecA.

Its subcellular location is the cell inner membrane. It is found in the cellular thylakoid membrane. Its function is as follows. Essential subunit of the Sec protein translocation channel SecYEG. Clamps together the 2 halves of SecY. May contact the channel plug during translocation. The chain is Protein translocase subunit SecE from Synechocystis sp. (strain ATCC 27184 / PCC 6803 / Kazusa).